The primary structure comprises 239 residues: MPALRFPSRLTEGRLVRRYKRFLADVELADGRLVTAHCANPGAMLGLAAPGRPVLLSAATSPGRKLAWSWEMVEADLPGGPQWVGINTMRPNHLVAEAFREGRLPALAGVTSLRPEVRYGRASRVDFLAEHPAGPIHVEVKNCHMMRDAGLAEFPDCIAARSARHMEELAAVVRGGGRAMVIVVVQMRAGRFTVAGDVDPAFAASFRRAQEAGVATVAYRCRLDPDEVAIEAEIPMLPA.

Belongs to the SfsA family.

The sequence is that of Sugar fermentation stimulation protein homolog from Methylobacterium sp. (strain 4-46).